The chain runs to 309 residues: Homoserine O-succinyltransferase (309 aa).

Catalysis depends on Cys142, which acts as the Acyl-thioester intermediate. 2 residues coordinate substrate: Lys163 and Ser192. The active-site Proton acceptor is the His235. Residue Glu237 is part of the active site. Arg249 lines the substrate pocket.

It belongs to the MetA family.

It is found in the cytoplasm. The catalysed reaction is L-homoserine + succinyl-CoA = O-succinyl-L-homoserine + CoA. The protein operates within amino-acid biosynthesis; L-methionine biosynthesis via de novo pathway; O-succinyl-L-homoserine from L-homoserine: step 1/1. In terms of biological role, transfers a succinyl group from succinyl-CoA to L-homoserine, forming succinyl-L-homoserine. This chain is Homoserine O-succinyltransferase, found in Serratia proteamaculans (strain 568).